Reading from the N-terminus, the 202-residue chain is ATP-dependent Clp protease proteolytic subunit (202 aa).

S106 serves as the catalytic Nucleophile. H131 is a catalytic residue.

Belongs to the peptidase S14 family. As to quaternary structure, fourteen ClpP subunits assemble into 2 heptameric rings which stack back to back to give a disk-like structure with a central cavity, resembling the structure of eukaryotic proteasomes.

The protein localises to the cytoplasm. The catalysed reaction is Hydrolysis of proteins to small peptides in the presence of ATP and magnesium. alpha-casein is the usual test substrate. In the absence of ATP, only oligopeptides shorter than five residues are hydrolyzed (such as succinyl-Leu-Tyr-|-NHMec, and Leu-Tyr-Leu-|-Tyr-Trp, in which cleavage of the -Tyr-|-Leu- and -Tyr-|-Trp bonds also occurs).. Cleaves peptides in various proteins in a process that requires ATP hydrolysis. Has a chymotrypsin-like activity. Plays a major role in the degradation of misfolded proteins. The protein is ATP-dependent Clp protease proteolytic subunit of Variovorax paradoxus (strain S110).